Reading from the N-terminus, the 150-residue chain is MSDYKIWVDADACPNPIKEILFRAAERKALPLVLVANQMIRIPPSPYISQIRVGAGFDVADQYIVDHVEPTHLVITADIPLAALIIEKGALALNPRGELYTVDNIKQKLTMRDFMEDLRGSGVHTGGPDSFSQADKQAFANSLDKWLVRV.

This sequence belongs to the UPF0178 family.

The polypeptide is UPF0178 protein Sbal223_2514 (Shewanella baltica (strain OS223)).